The sequence spans 235 residues: Tetraspanin-8 (235 aa).

The Cytoplasmic segment spans residues 1–12; the sequence is MAGVSSCLKYSM. A helical transmembrane segment spans residues 13–33; it reads FFFNFLFWVCGTLILGLAIWV. Residues 34–52 are Extracellular-facing; the sequence is RVSKDGKEIITSGDSSTNP. A helical membrane pass occupies residues 53 to 73; the sequence is FIAVNILIAVGSIIMVLGFLG. Residues 74 to 84 lie on the Cytoplasmic side of the membrane; that stretch reads CCGAVKESRCM. A helical membrane pass occupies residues 85–105; sequence LLLFFIGLLLILILQVAAGIL. Over 106–203 the chain is Extracellular; it reads GAAFKPEYNR…SLIKDLFEKN (98 aa). An N-linked (GlcNAc...) asparagine glycan is attached at Asn118. Residues 204 to 224 traverse the membrane as a helical segment; it reads IIIVIGIAFGLAVIEILGLVF. Over 225–235 the chain is Cytoplasmic; it reads SMVLYCQIGSK.

Belongs to the tetraspanin (TM4SF) family. As to quaternary structure, forms homooligomers. Interacts with MEP1B. Interacts with integrin alpha3/ITGA3. Interacts with RICTOR and MTOR. Interacts with ADAM17. Interacts with ECE1.

The protein localises to the cell membrane. Structural component of specialized membrane microdomains known as tetraspanin-enriched microdomains (TERMs), which act as platforms for receptor clustering and signaling. Participates thereby in diverse biological functions such as cell signal transduction, migration and protein trafficking. Promotes ADAM17-mediated TNF-alpha processing through recruitment of ADAM17 to tetraspanin-enriched micro-domains (TEMs). Forms a complex with RICTOR and integrin alpha3/ITGA3 to mediate mTORC2 activation and AKT1 phosphorylation leading to cell migration. Reduces apoptosis and autophagy induced by high glucose levels through forming a complex with mTOR and RICTOR. Contributes to the maintenance of intestinal epithelial barrier and plays a role in the regulation of intestine inflammation by switching interferon gamma receptor 1/IFNGR1 from clathrin-dependent to lipid raft-dependent endocytosis route to limit STAT1 activation magnitude and duration. Acts as a modulator of the endothelin axis by associating with endothelin converting enzyme ECE1 and regulating its activity of conversion of the endothelin-1 precursor to endothelin. The chain is Tetraspanin-8 (Tspan8) from Mus musculus (Mouse).